Reading from the N-terminus, the 314-residue chain is Methionyl-tRNA formyltransferase (314 aa).

112-115 contacts (6S)-5,6,7,8-tetrahydrofolate; sequence SLLP.

The protein belongs to the Fmt family.

It catalyses the reaction L-methionyl-tRNA(fMet) + (6R)-10-formyltetrahydrofolate = N-formyl-L-methionyl-tRNA(fMet) + (6S)-5,6,7,8-tetrahydrofolate + H(+). Its function is as follows. Attaches a formyl group to the free amino group of methionyl-tRNA(fMet). The formyl group appears to play a dual role in the initiator identity of N-formylmethionyl-tRNA by promoting its recognition by IF2 and preventing the misappropriation of this tRNA by the elongation apparatus. In Buchnera aphidicola subsp. Acyrthosiphon pisum (strain 5A), this protein is Methionyl-tRNA formyltransferase.